A 231-amino-acid polypeptide reads, in one-letter code: Adenosylcobinamide-GDP ribazoletransferase (231 aa).

Helical transmembrane passes span 24 to 44 (LWAFPLVALVSSALPTLILYL), 46 to 66 (LPLSNLLAVLALYWTIGLLHL), 96 to 116 (IAGLFAVVIVLLLQVYSLQLL), 159 to 176 (LALGTLLYVLLGLSVVLF), 181 to 198 (LAGILGLLFGVHIIRISL), and 209 to 229 (LGATAEITRAGTLVVMALVWW).

Belongs to the CobS family. It depends on Mg(2+) as a cofactor.

It is found in the cell membrane. The catalysed reaction is alpha-ribazole + adenosylcob(III)inamide-GDP = adenosylcob(III)alamin + GMP + H(+). It carries out the reaction alpha-ribazole 5'-phosphate + adenosylcob(III)inamide-GDP = adenosylcob(III)alamin 5'-phosphate + GMP + H(+). It participates in cofactor biosynthesis; adenosylcobalamin biosynthesis; adenosylcobalamin from cob(II)yrinate a,c-diamide: step 7/7. Joins adenosylcobinamide-GDP and alpha-ribazole to generate adenosylcobalamin (Ado-cobalamin). Also synthesizes adenosylcobalamin 5'-phosphate from adenosylcobinamide-GDP and alpha-ribazole 5'-phosphate. The polypeptide is Adenosylcobinamide-GDP ribazoletransferase (Thermococcus kodakarensis (strain ATCC BAA-918 / JCM 12380 / KOD1) (Pyrococcus kodakaraensis (strain KOD1))).